Reading from the N-terminus, the 71-residue chain is Small ribosomal subunit protein bS18 (71 aa).

Belongs to the bacterial ribosomal protein bS18 family. As to quaternary structure, part of the 30S ribosomal subunit. Forms a tight heterodimer with protein bS6.

Its function is as follows. Binds as a heterodimer with protein bS6 to the central domain of the 16S rRNA, where it helps stabilize the platform of the 30S subunit. The protein is Small ribosomal subunit protein bS18 of Thermosynechococcus vestitus (strain NIES-2133 / IAM M-273 / BP-1).